The chain runs to 27 residues: Urumin (27 aa).

Expressed by the skin glands.

Its subcellular location is the secreted. Functionally, amphibian peptide that shows viricidal activity against human H1N1 influenza A virus. It specifically targets the conserved stalk region of H1 hemagglutinin, and acts by actively destroying influenza virions. It shows a reduced activity on human H3N2 influenza A virus and no activity against other viruses (HIV, SIV, HSV-II, hepatitis C, Ebola, Zika, and Dengue viruses). In vivo, the peptide also protects mice infected with mouse-adapted influenza virus from lethal influenza infection. The peptide synthesized in D-amino acids is inactive. The polypeptide is Urumin (Hydrophylax bahuvistara (Wide-spread fungoid frog)).